A 187-amino-acid chain; its full sequence is UPF0215 protein PAE0952 (187 aa).

This sequence belongs to the UPF0215 family.

The sequence is that of UPF0215 protein PAE0952 from Pyrobaculum aerophilum (strain ATCC 51768 / DSM 7523 / JCM 9630 / CIP 104966 / NBRC 100827 / IM2).